The sequence spans 559 residues: Palmitoyltransferase AKR1 (559 aa).

3 ANK repeats span residues 8 to 38 (QGFN…PVDT), 42 to 71 (LGHT…RVDT), and 75 to 104 (EGFT…DIKA). The next 3 helical transmembrane spans lie at 148-168 (LMVL…FLFG), 192-212 (TAVF…YLLG), and 217-237 (LLWM…FFYG). Residues 272–322 (HFCVSCIAQRPLRSKHCKFCNRCVAKFDHHCPWIYNCIGAKNHRAFLIFLA) form the DHHC domain. Residue cysteine 302 is the S-palmitoyl cysteine intermediate of the active site. 2 helical membrane-spanning segments follow: residues 316 to 336 (AFLI…YLSF) and 373 to 393 (LAFW…VQLY).

Belongs to the DHHC palmitoyltransferase family. AKR/ZDHHC17 subfamily.

The protein resides in the early endosome membrane. It localises to the golgi apparatus membrane. The enzyme catalyses L-cysteinyl-[protein] + hexadecanoyl-CoA = S-hexadecanoyl-L-cysteinyl-[protein] + CoA. In terms of biological role, palmitoyltransferase specific for casein kinase 1. This Mortierella alpina (Oleaginous fungus) protein is Palmitoyltransferase AKR1.